Consider the following 513-residue polypeptide: GMP synthase [glutamine-hydrolyzing] (513 aa).

One can recognise a Glutamine amidotransferase type-1 domain in the interval 3–192; the sequence is TVVVLDYGSQ…VSKVAKMEKN (190 aa). Cysteine 80 acts as the Nucleophile in catalysis. Catalysis depends on residues histidine 166 and glutamate 168. One can recognise a GMPS ATP-PPase domain in the interval 193 to 388; the sequence is WKMTDFIEEK…LGLPDEMINR (196 aa). 220-226 contributes to the ATP binding site; the sequence is SGGVDSS.

In terms of assembly, homodimer.

The catalysed reaction is XMP + L-glutamine + ATP + H2O = GMP + L-glutamate + AMP + diphosphate + 2 H(+). Its pathway is purine metabolism; GMP biosynthesis; GMP from XMP (L-Gln route): step 1/1. Catalyzes the synthesis of GMP from XMP. This is GMP synthase [glutamine-hydrolyzing] from Thermosipho africanus (strain TCF52B).